The chain runs to 281 residues: Lectin alpha chain (281 aa).

3 N-linked (GlcNAc...) asparagine glycosylation sites follow: Asn35, Asn82, and Asn140.

Belongs to the leguminous lectin family. Tetramer of 2 alpha and 2 beta chains. Glycosylated. In terms of processing, the beta chain is produced by partial proteolytic processing of the alpha chain.

In terms of biological role, D-galactose-binding lectin. In Lablab purpureus (Hyacinth bean), this protein is Lectin alpha chain.